A 173-amino-acid polypeptide reads, in one-letter code: ATP synthase subunit delta (173 aa).

The protein belongs to the ATPase delta chain family. In terms of assembly, F-type ATPases have 2 components, F(1) - the catalytic core - and F(0) - the membrane proton channel. F(1) has five subunits: alpha(3), beta(3), gamma(1), delta(1), epsilon(1). F(0) has three main subunits: a(1), b(2) and c(10-14). The alpha and beta chains form an alternating ring which encloses part of the gamma chain. F(1) is attached to F(0) by a central stalk formed by the gamma and epsilon chains, while a peripheral stalk is formed by the delta and b chains.

The protein resides in the cell inner membrane. F(1)F(0) ATP synthase produces ATP from ADP in the presence of a proton or sodium gradient. F-type ATPases consist of two structural domains, F(1) containing the extramembraneous catalytic core and F(0) containing the membrane proton channel, linked together by a central stalk and a peripheral stalk. During catalysis, ATP synthesis in the catalytic domain of F(1) is coupled via a rotary mechanism of the central stalk subunits to proton translocation. Its function is as follows. This protein is part of the stalk that links CF(0) to CF(1). It either transmits conformational changes from CF(0) to CF(1) or is implicated in proton conduction. The polypeptide is ATP synthase subunit delta (Campylobacter jejuni subsp. doylei (strain ATCC BAA-1458 / RM4099 / 269.97)).